The chain runs to 184 residues: Bcl-2-modifying factor (184 aa).

The tract at residues 67-75 (DKATQTLSP) is interaction with DLC2. A BH3 motif is present at residues 133-147 (IARKLQCIADQFHRL).

Belongs to the Bcl-2 family. Interacts with MCL1, BCL2, BCL2L1/BCL-Xl, BCL2A1 and BCL2L2/BCL-w. Interacts with the myosin V actin motor complex through its binding to DLC2. As to expression, isoform 1 is mainly expressed in B-lymphoid cells. Isoform 2 and isoform 3 are mainly expressed in B-CLL and normal B-cells.

Its function is as follows. May play a role in apoptosis. Isoform 1 seems to be the main initiator. The protein is Bcl-2-modifying factor (BMF) of Homo sapiens (Human).